A 454-amino-acid polypeptide reads, in one-letter code: Bifunctional protein GlmU (454 aa).

The tract at residues 1-227 is pyrophosphorylase; it reads MTQLSVVILA…FMEVEGANNR (227 aa). Residues 9–12, Lys23, Gln74, 79–80, 101–103, Gly138, Glu152, Asn167, and Asn225 each bind UDP-N-acetyl-alpha-D-glucosamine; these read LAAG, GT, and YGD. Asp103 lines the Mg(2+) pocket. Asn225 provides a ligand contact to Mg(2+). The linker stretch occupies residues 228–248; that stretch reads LQLAALERFYQKTQAEKLLLA. The N-acetyltransferase stretch occupies residues 249 to 454; the sequence is GVRLIDPARF…QGWQRPTKKK (206 aa). The UDP-N-acetyl-alpha-D-glucosamine site is built by Arg331 and Lys349. His361 (proton acceptor) is an active-site residue. UDP-N-acetyl-alpha-D-glucosamine contacts are provided by Tyr364 and Asn375. Acetyl-CoA is bound by residues Ala378, 384-385, Ser403, Ala421, and Arg438; that span reads NY.

It in the N-terminal section; belongs to the N-acetylglucosamine-1-phosphate uridyltransferase family. This sequence in the C-terminal section; belongs to the transferase hexapeptide repeat family. Homotrimer. Mg(2+) is required as a cofactor.

Its subcellular location is the cytoplasm. It catalyses the reaction alpha-D-glucosamine 1-phosphate + acetyl-CoA = N-acetyl-alpha-D-glucosamine 1-phosphate + CoA + H(+). The catalysed reaction is N-acetyl-alpha-D-glucosamine 1-phosphate + UTP + H(+) = UDP-N-acetyl-alpha-D-glucosamine + diphosphate. Its pathway is nucleotide-sugar biosynthesis; UDP-N-acetyl-alpha-D-glucosamine biosynthesis; N-acetyl-alpha-D-glucosamine 1-phosphate from alpha-D-glucosamine 6-phosphate (route II): step 2/2. It functions in the pathway nucleotide-sugar biosynthesis; UDP-N-acetyl-alpha-D-glucosamine biosynthesis; UDP-N-acetyl-alpha-D-glucosamine from N-acetyl-alpha-D-glucosamine 1-phosphate: step 1/1. It participates in bacterial outer membrane biogenesis; LPS lipid A biosynthesis. Catalyzes the last two sequential reactions in the de novo biosynthetic pathway for UDP-N-acetylglucosamine (UDP-GlcNAc). The C-terminal domain catalyzes the transfer of acetyl group from acetyl coenzyme A to glucosamine-1-phosphate (GlcN-1-P) to produce N-acetylglucosamine-1-phosphate (GlcNAc-1-P), which is converted into UDP-GlcNAc by the transfer of uridine 5-monophosphate (from uridine 5-triphosphate), a reaction catalyzed by the N-terminal domain. In Actinobacillus pleuropneumoniae serotype 3 (strain JL03), this protein is Bifunctional protein GlmU.